We begin with the raw amino-acid sequence, 490 residues long: GTPase Der (490 aa).

Residues 3–166 (PVIALVGRPN…IALSEFPKDD (164 aa)) form the EngA-type G 1 domain. Residues 9–16 (GRPNVGKS), 56–60 (DTGGI), and 118–121 (NKVD) each bind GTP. The disordered stretch occupies residues 164–191 (KDDADEPEEGEEEIVAEGEEAKRIPGPS). Residues 166–181 (DADEPEEGEEEIVAEG) are compositionally biased toward acidic residues. Basic and acidic residues predominate over residues 182–191 (EEAKRIPGPS). An EngA-type G 2 domain is found at 196 to 369 (IKIAIIGRPN…SVQNSFKSAV (174 aa)). GTP contacts are provided by residues 202 to 209 (GRPNVGKS), 249 to 253 (DTAGV), and 314 to 317 (NKWD). Positions 370 to 454 (TRWPTSRLTQ…PIRIEFKGGE (85 aa)) constitute a KH-like domain. Residues 452-490 (GGENPYEGNKNTLTDRQVNKKRRLMSHHKKADKKRRDKR) form a disordered region. Positions 470–490 (NKKRRLMSHHKKADKKRRDKR) are enriched in basic residues.

This sequence belongs to the TRAFAC class TrmE-Era-EngA-EngB-Septin-like GTPase superfamily. EngA (Der) GTPase family. Associates with the 50S ribosomal subunit.

In terms of biological role, GTPase that plays an essential role in the late steps of ribosome biogenesis. This is GTPase Der from Pseudomonas fluorescens (strain ATCC BAA-477 / NRRL B-23932 / Pf-5).